The sequence spans 523 residues: Ribonuclease Y (523 aa).

The chain crosses the membrane as a helical span at residues 18–38 (WSLTVALVIGGALGFLVVWAF). Positions 213-276 (TSTIVSLPNE…EVARGALEAL (64 aa)) constitute a KH domain. The region spanning 339-432 (VLDHSVETAS…VILADTISAT (94 aa)) is the HD domain.

The protein belongs to the RNase Y family.

Its subcellular location is the cell membrane. Functionally, endoribonuclease that initiates mRNA decay. The chain is Ribonuclease Y from Opitutus terrae (strain DSM 11246 / JCM 15787 / PB90-1).